A 781-amino-acid chain; its full sequence is Cation channel sperm-associated auxiliary subunit delta (781 aa).

A signal peptide spans 1-20 (MLVLMLVVATTFRLCPLVKA). Residues 21–725 (RPLCRIRTLR…YGAFPLSIFP (705 aa)) lie on the Extracellular side of the membrane. 7 disulfide bridges follow: cysteine 24–cysteine 370, cysteine 60–cysteine 146, cysteine 145–cysteine 153, cysteine 388–cysteine 497, cysteine 511–cysteine 705, cysteine 526–cysteine 573, and cysteine 625–cysteine 655. N-linked (GlcNAc...) asparagine glycans are attached at residues asparagine 231, asparagine 294, asparagine 458, asparagine 473, asparagine 539, and asparagine 631. The helical transmembrane segment at 726–749 (PEITIVLLTAATLLSIWLAYMIPQ) threads the bilayer. The Cytoplasmic portion of the chain corresponds to 750 to 781 (LLHTEQGLEGNGFWVRLYQRCRKSCACLWGRC).

It belongs to the CATSPERD family. In terms of assembly, component of the CatSper complex or CatSpermasome composed of the core pore-forming members CATSPER1, CATSPER2, CATSPER3 and CATSPER4 as well as auxiliary members CATSPERB, CATSPERG, CATSPERD, CATSPERE, CATSPERZ, C2CD6/CATSPERT, TMEM249, TMEM262 and EFCAB9. HSPA1 may be an additional auxiliary complex member. The core complex members CATSPER1, CATSPER2, CATSPER3 and CATSPER4 form a heterotetrameric channel. The auxiliary CATSPERB, CATSPERG, CATSPERD and CATSPERE subunits form a pavilion-like structure over the pore which stabilizes the complex through interactions with CATSPER4, CATSPER3, CATSPER1 and CATSPER2 respectively. TMEM262/CATSPERH interacts with CATSPERB, further stabilizing the complex. C2CD6/CATSPERT interacts at least with CATSPERD and is required for targeting the CatSper complex in the flagellar membrane.

It is found in the cell projection. It localises to the cilium. Its subcellular location is the flagellum membrane. Functionally, auxiliary component of the CatSper complex, a complex involved in sperm cell hyperactivation. Sperm cell hyperactivation is needed for sperm motility which is essential late in the preparation of sperm for fertilization. Required for CATSPER1 stability before intraflagellar transport and/or incorporation of the CatSper complex channel into the flagellar membrane. This is Cation channel sperm-associated auxiliary subunit delta from Bos taurus (Bovine).